The sequence spans 334 residues: AA9 family lytic polysaccharide monooxygenase A (334 aa).

The first 22 residues, 1–22 (MSPSFKSTAILGAVALAARVRA), serve as a signal peptide directing secretion. Residues H23 and H108 each coordinate Cu(2+). Disulfide bonds link C78–C200 and C119–C123. N-linked (GlcNAc...) asparagine glycosylation is present at N160. O2 is bound by residues H186 and Q195. Cu(2+) is bound at residue Y197. N208 carries an N-linked (GlcNAc...) asparagine glycan. The tract at residues 244–304 (GPALYTGGSS…PSPSLPVEIP (61 aa)) is disordered. A compositionally biased stretch (low complexity) spans 249–265 (TGGSSPSPNPPTSTQSP).

Belongs to the polysaccharide monooxygenase AA9 family. Cu(2+) serves as cofactor.

It is found in the secreted. It carries out the reaction [(1-&gt;4)-beta-D-glucosyl]n+m + reduced acceptor + O2 = 4-dehydro-beta-D-glucosyl-[(1-&gt;4)-beta-D-glucosyl]n-1 + [(1-&gt;4)-beta-D-glucosyl]m + acceptor + H2O.. Functionally, lytic polysaccharide monooxygenase (LPMO) that depolymerizes crystalline and amorphous polysaccharides via the oxidation of scissile alpha- or beta-(1-4)-glycosidic bonds, yielding C1 or C4 oxidation products. Catalysis by LPMOs requires the reduction of the active-site copper from Cu(II) to Cu(I) by a reducing agent and H(2)O(2) or O(2) as a cosubstrate. Active on hemicelluloses, including xylan, glucomannan, and xyloglucan. Shows clear activity on cellooligosaccharides, generating C4 oxidation products. Also displays activity on konjac glucomannan (KGM), a linear beta-1,4-linked mannan with randomly distributed glucosyl residues; as well as trace activity on lichenan, a linear beta-1,3-beta-1,4-glucan with a 1:2 ratio of beta-1,3 to beta-1,4 linkages. Has no activity on ivory nut mannan (INM), a linear beta-1,4-linked mannan without substitutions. In Malbranchea cinnamomea (Thermophilic fungus), this protein is AA9 family lytic polysaccharide monooxygenase A.